A 113-amino-acid polypeptide reads, in one-letter code: Phosphoribosyl-ATP pyrophosphatase (113 aa).

This sequence belongs to the PRA-PH family.

Its subcellular location is the cytoplasm. It carries out the reaction 1-(5-phospho-beta-D-ribosyl)-ATP + H2O = 1-(5-phospho-beta-D-ribosyl)-5'-AMP + diphosphate + H(+). Its pathway is amino-acid biosynthesis; L-histidine biosynthesis; L-histidine from 5-phospho-alpha-D-ribose 1-diphosphate: step 2/9. The sequence is that of Phosphoribosyl-ATP pyrophosphatase from Hydrogenovibrio crunogenus (strain DSM 25203 / XCL-2) (Thiomicrospira crunogena).